A 105-amino-acid polypeptide reads, in one-letter code: Large ribosomal subunit protein bL21 (105 aa).

The protein belongs to the bacterial ribosomal protein bL21 family. As to quaternary structure, part of the 50S ribosomal subunit. Contacts protein L20.

This protein binds to 23S rRNA in the presence of protein L20. The chain is Large ribosomal subunit protein bL21 from Rhizobium etli (strain ATCC 51251 / DSM 11541 / JCM 21823 / NBRC 15573 / CFN 42).